Consider the following 737-residue polypeptide: Photosystem I P700 chlorophyll a apoprotein A2 (737 aa).

Transmembrane regions (helical) follow at residues 46–69 (LFSTHFGHLAIIGLWVSGNLFHIA), 135–158 (LYQGSIFMMILSAWALFAGWLHLQ), 175–199 (LNHHLAVLFGFSSIAWTGHLVHVAI), 273–291 (IAHHHLAIGCIFVIAGHMY), 333–356 (LHFQLGLALASLGVVTSLVAQHMY), 372–398 (AALYTHHQYIAIALMCGAFAHGAIFFI), 420–442 (AIISHLSWVSLFLGFHTLGLYVH), and 520–538 (FLVHHAIALGLHTTTLILV). Residues C562 and C571 each coordinate [4Fe-4S] cluster. The next 2 membrane-spanning stretches (helical) occupy residues 578–599 (AFYLAVFWALNTVGWVTFYWHW) and 646–668 (LAVWAWMFLFGHLVWATGFMFLI). The chlorophyll a site is built by H657, M665, and Y673. W674 serves as a coordination point for phylloquinone. Residues 710 to 730 (VVGLAHFSVGYVLTYAAFLIA) form a helical membrane-spanning segment.

It belongs to the PsaA/PsaB family. In terms of assembly, the PsaA/B heterodimer binds the P700 chlorophyll special pair and subsequent electron acceptors. PSI consists of a core antenna complex that captures photons, and an electron transfer chain that converts photonic excitation into a charge separation. The cyanobacterial PSI reaction center is composed of one copy each of PsaA,B,C,D,E,F,I,J,K,L,M and X, and forms trimeric complexes. PSI electron transfer chain: 5 chlorophyll a, 1 chlorophyll a', 2 phylloquinones and 3 4Fe-4S clusters. PSI core antenna: 90 chlorophyll a, 22 carotenoids, 3 phospholipids and 1 galactolipid. P700 is a chlorophyll a/chlorophyll a' dimer, A0 is one or more chlorophyll a, A1 is one or both phylloquinones and FX is a shared 4Fe-4S iron-sulfur center. serves as cofactor.

The protein localises to the cellular thylakoid membrane. It carries out the reaction reduced [plastocyanin] + hnu + oxidized [2Fe-2S]-[ferredoxin] = oxidized [plastocyanin] + reduced [2Fe-2S]-[ferredoxin]. Its function is as follows. PsaA and PsaB bind P700, the primary electron donor of photosystem I (PSI), as well as the electron acceptors A0, A1 and FX. PSI is a plastocyanin/cytochrome c6-ferredoxin oxidoreductase, converting photonic excitation into a charge separation, which transfers an electron from the donor P700 chlorophyll pair to the spectroscopically characterized acceptors A0, A1, FX, FA and FB in turn. Oxidized P700 is reduced on the lumenal side of the thylakoid membrane by plastocyanin or cytochrome c6. This chain is Photosystem I P700 chlorophyll a apoprotein A2, found in Parasynechococcus marenigrum (strain WH8102).